The primary structure comprises 233 residues: MSGTIFIISAPSGSGKSSLVNELRHVVPGLEFSISYTTRAPRGSEQNGREYFFVTREKFDAMLAADEFLEHAEVFGECYGTAKHFVTEALARGNDLVLDIDVQGAAQLKVKLPDAVGIFILPPSRKELEARLKRRNLSDHVAPEVIERRLKGAGKEIENFSHYDYILVNDNFETAVEQLRAIVLAERIRRSSTQISEENRAILEAAECCIRKNAMQRVQSILDSFKDATDPQP.

The region spanning 3–184 (GTIFIISAPS…AVEQLRAIVL (182 aa)) is the Guanylate kinase-like domain. 10 to 17 (APSGSGKS) provides a ligand contact to ATP.

The protein belongs to the guanylate kinase family.

It localises to the cytoplasm. The enzyme catalyses GMP + ATP = GDP + ADP. Its function is as follows. Essential for recycling GMP and indirectly, cGMP. The protein is Guanylate kinase of Koribacter versatilis (strain Ellin345).